A 149-amino-acid chain; its full sequence is 3-dehydroquinate dehydratase (149 aa).

Y26 serves as the catalytic Proton acceptor. N77, H83, and D90 together coordinate substrate. H103 serves as the catalytic Proton donor. Substrate contacts are provided by residues 104-105 (LS) and R114.

Belongs to the type-II 3-dehydroquinase family. In terms of assembly, homododecamer.

The enzyme catalyses 3-dehydroquinate = 3-dehydroshikimate + H2O. The protein operates within metabolic intermediate biosynthesis; chorismate biosynthesis; chorismate from D-erythrose 4-phosphate and phosphoenolpyruvate: step 3/7. Catalyzes a trans-dehydration via an enolate intermediate. The polypeptide is 3-dehydroquinate dehydratase (aroQ) (Haemophilus influenzae (strain ATCC 51907 / DSM 11121 / KW20 / Rd)).